The following is a 237-amino-acid chain: Orotate phosphoribosyltransferase (237 aa).

Residue K29 participates in 5-phospho-alpha-D-ribose 1-diphosphate binding. 37–38 (FF) is an orotate binding site. Residues 79–80 (YK), R105, K106, K109, H111, and 130–138 (DDVMSAGTA) each bind 5-phospho-alpha-D-ribose 1-diphosphate. Orotate contacts are provided by S134 and R162.

This sequence belongs to the purine/pyrimidine phosphoribosyltransferase family. PyrE subfamily. In terms of assembly, homodimer. It depends on Mg(2+) as a cofactor.

The enzyme catalyses orotidine 5'-phosphate + diphosphate = orotate + 5-phospho-alpha-D-ribose 1-diphosphate. It participates in pyrimidine metabolism; UMP biosynthesis via de novo pathway; UMP from orotate: step 1/2. In terms of biological role, catalyzes the transfer of a ribosyl phosphate group from 5-phosphoribose 1-diphosphate to orotate, leading to the formation of orotidine monophosphate (OMP). The sequence is that of Orotate phosphoribosyltransferase from Polaromonas naphthalenivorans (strain CJ2).